The chain runs to 189 residues: MKTGKELKPGTVIRLENDPWLVQKAEFTKSGRNSAIMKTKLKNLLTGYKTEIVYSADDKLDDVILDRKEATLSFISGDTYTFMDTTDYTMYELNAEDIESVLPFVEEGMTDVCEAVFFDERLVSVELPTTIVRQVDYTEGSARGDTSGKVMKPAKLKNGTELSVADFIEIGDMIEIDTREGGSYKGRAK.

The protein belongs to the elongation factor P family.

The protein resides in the cytoplasm. It functions in the pathway protein biosynthesis; polypeptide chain elongation. Functionally, involved in peptide bond synthesis. Stimulates efficient translation and peptide-bond synthesis on native or reconstituted 70S ribosomes in vitro. Probably functions indirectly by altering the affinity of the ribosome for aminoacyl-tRNA, thus increasing their reactivity as acceptors for peptidyl transferase. The protein is Elongation factor P of Pseudomonas syringae pv. tomato (strain ATCC BAA-871 / DC3000).